The following is a 236-amino-acid chain: 4-aminobenzoate synthase (236 aa).

Residues glutamate 87, histidine 94, glutamate 148, histidine 180, aspartate 184, and histidine 187 each contribute to the Fe(2+) site.

This sequence belongs to the CADD family. In terms of assembly, homodimer. Fe(2+) is required as a cofactor. Requires Mn(2+) as cofactor.

Involved in de novo para-aminobenzoate (PABA) biosynthesis. Acts as a self-sacrificing or 'suicide' enzyme that utilizes its own active site tyrosine residue(s) as the substrate for PABA synthesis. The side chain of the tyrosine residue is released from the protein backbone via cleavage of the C(alpha)-C(beta) bond, leaving a glycine in place of the original tyrosine residue. Reaction requires O(2) and a reduced dimetal cofactor. The protein is 4-aminobenzoate synthase of Chlamydia muridarum (strain MoPn / Nigg).